The following is a 194-amino-acid chain: MTVLLALDGVACIRGDRLVFEELSLALNRGDALWVRGPNGAGKSSLIRLAAGLLRPAAGRVVRRGRIALIDEAAALDSELPLRRALDFWARVDTVDGHAVDRAMDMMALNTLADVPVAMLSTGQRRRAAMVRVIASGAPIWLLDEPANGMDQAATARLVAAIATHRANGGAVLLASHFALAIPDLDELVMGVLA.

The ABC transporter domain maps to 5–194; the sequence is LALDGVACIR…LDELVMGVLA (190 aa). 37 to 44 is an ATP binding site; that stretch reads GPNGAGKS.

Belongs to the ABC transporter superfamily. CcmA exporter (TC 3.A.1.107) family. The complex is composed of two ATP-binding proteins (CcmA) and two transmembrane proteins (CcmB).

It localises to the cell inner membrane. The catalysed reaction is heme b(in) + ATP + H2O = heme b(out) + ADP + phosphate + H(+). Its function is as follows. Part of the ABC transporter complex CcmAB involved in the biogenesis of c-type cytochromes; once thought to export heme, this seems not to be the case, but its exact role is uncertain. Responsible for energy coupling to the transport system. The polypeptide is Cytochrome c biogenesis ATP-binding export protein CcmA (Sphingopyxis alaskensis (strain DSM 13593 / LMG 18877 / RB2256) (Sphingomonas alaskensis)).